The chain runs to 224 residues: Urease accessory protein UreF (224 aa).

It belongs to the UreF family. As to quaternary structure, ureD, UreF and UreG form a complex that acts as a GTP-hydrolysis-dependent molecular chaperone, activating the urease apoprotein by helping to assemble the nickel containing metallocenter of UreC. The UreE protein probably delivers the nickel.

Its subcellular location is the cytoplasm. Functionally, required for maturation of urease via the functional incorporation of the urease nickel metallocenter. The polypeptide is Urease accessory protein UreF (Pseudomonas putida (strain W619)).